The sequence spans 629 residues: Forkhead box protein O (629 aa).

Thr-49 bears the Phosphothreonine; by PKB/AKT1 mark. A Phosphoserine modification is found at Ser-78. Residues 98-204 (WGNLSYADLI…ETSRYEKRRG (107 aa)) constitute a DNA-binding region (fork-head). Disordered stretches follow at residues 185–208 (KSVR…RAKK), 220–274 (GLND…SPIR), 321–368 (QQQF…QTLQ), 394–417 (SPNS…DSLN), and 563–597 (QHLQ…NSSL). Residue Ser-193 is modified to Phosphoserine; by PKB/AKT1. 2 stretches are compositionally biased toward polar residues: residues 224 to 233 (ATPSPSSSVS) and 259 to 268 (RASSNASSCG). Position 262 is a phosphoserine; by PKB/AKT1 (Ser-262). Ser-265, Ser-266, and Ser-271 each carry phosphoserine. Over residues 332–341 (SQPPPPPYQP) the composition is skewed to pro residues. The span at 342–356 (PQLQQQQQQQPSYSL) shows a compositional bias: low complexity. The segment covering 394 to 403 (SPNSVTTTMS) has biased composition (polar residues).

As to quaternary structure, interacts with melt.

The protein resides in the cytoplasm. The protein localises to the nucleus. Transcription factor involved in the regulation of the insulin signaling pathway. Consistently activates both the downstream target Thor\d4EBP and the feedback control target InR. Involved in negative regulation of the cell cycle, modulating cell growth and proliferation. In response to cellular stresses, such as nutrient deprivation or increased levels of reactive oxygen species, foxo is activated and inhibits growth through the action of target genes such as Thor. Foxo activated in the adult fat body can regulate lifespan in adults; an insulin peptide itself may function as one secondary messenger of insulin-regulated aging. Also regulates Lip4, homolog of human acid lipases, thereby acting as a key modulator of lipid metabolism by insulin signaling and integrates insulin responses to glucose and lipid homeostasis. The protein is Forkhead box protein O of Drosophila persimilis (Fruit fly).